The following is a 484-amino-acid chain: Serine/threonine-protein kinase RIO1 (484 aa).

Residues 76–402 (ADLNGCLSTG…EFDNADHECS (327 aa)) form the Protein kinase domain. Residues lysine 125 and leucine 198 each contribute to the ATP site. Catalysis depends on aspartate 244, which acts as the Proton acceptor. Asparagine 249 and aspartate 261 together coordinate Mg(2+). Residue aspartate 261 is the 4-aspartylphosphate intermediate of the active site. Residues 398 to 484 (DHECSSGTEE…KLVKKTKSKK (87 aa)) form a disordered region. Serine 402, serine 403, serine 409, serine 416, serine 417, and serine 419 each carry phosphoserine; by CK2. An interaction with CKA2 region spans residues 403-484 (SGTEEFSDDE…KLVKKTKSKK (82 aa)). Residues 407–434 (EFSDDEEDGSSGSEEDDEEEGEYYDDDE) show a composition bias toward acidic residues. The segment at 440 to 484 (GKKHEDKDLKKLRKQEAKDAKREKRKTKVKKHIKKKLVKKTKSKK) is association with (pre-)40S ribosomal subunit. Residues 442 to 461 (KHEDKDLKKLRKQEAKDAKR) are compositionally biased toward basic and acidic residues. Positions 462–484 (EKRKTKVKKHIKKKLVKKTKSKK) are enriched in basic residues.

Belongs to the protein kinase superfamily. RIO-type Ser/Thr kinase family. Interacts with CKA2. It depends on Mg(2+) as a cofactor. Autophosphorylated. Phosphorylated by casein kinase II (CK2). Phosphorylation by CK2 stimulates RIO1 kinase activity and targets it for degradation at the G1/S transition of the cell cycle.

It localises to the cytoplasm. It carries out the reaction L-seryl-[protein] + ATP = O-phospho-L-seryl-[protein] + ADP + H(+). The enzyme catalyses L-threonyl-[protein] + ATP = O-phospho-L-threonyl-[protein] + ADP + H(+). It catalyses the reaction ATP + H2O = ADP + phosphate + H(+). Its function is as follows. Required for the final endonucleolytic cleavage at site D converting 20S pre-rRNA into the mature 18S rRNA. Required for the final steps of cytoplasmic maturation of the 40S ribosomal subunit. The association with the very late 40S subunit intermediate seems to follow RIO2 association with precursors of the 40S subunit and may involve a translation-like checkpoint point cycle preceeding the binding to the 60S ribosomal subunit. Despite the protein kinase domain is proposed to act predominantly as an ATPase. The catalytic activity regulates its dynamic association with the 40S subunit. Has a role in the cell cycle where it is required for entrance into S-phase and in the control of the onset of anaphase. Appears to also be involved in the maintenance of chromosome stability and correct mitotic segregation. The protein is Serine/threonine-protein kinase RIO1 (RIO1) of Saccharomyces cerevisiae (strain ATCC 204508 / S288c) (Baker's yeast).